A 490-amino-acid chain; its full sequence is MKPKLMYQELKVPAEEPANELPMNEIEAWKAAEKKARWVLLVLILAVVGFGALMTQLFLWEYGDLHLFGPNQRPAPCYDPCEAVLVESIPEGLDFPNASTGNPSTSQAWLGLLAGAHSSLDIASFYWTLTNNDTHTQEPSAQQGEEVLRQLQTLAPKGVNVRIAVSKPNGPQPQTDLQALLQSGAQVRMVDMQKLTHGVLHTKFWVVDQTHFYLGSANMDWRSLTQVKELGVVMYNCSCLARDLTKIFEAYWFLGQAGSSIPSTWPRFYDTRYNQETPMEICLNGTPALAYLASAPPPLCPSGRTPDLKALLNVVDNARSFIYIAVMNYLPTLEFSHPHRFWPAIDDGLRRAAYERGVKVRLLVSCWRHSESSMRAFLLSLAALRDNHTHSDIQVKLFVVPADEAQARIPYARVNHNKYMVTERATYIGTSNWSGNYFTETAGTSLLVMQNGRGSLRSQLEAIFLRDWDSPYSHDLDASADSVGNACRLL.

Residues Met1–Trp38 are Cytoplasmic-facing. The helical; Signal-anchor for type II membrane protein transmembrane segment at Val39–Leu59 threads the bilayer. The Lumenal portion of the chain corresponds to Trp60 to Leu490. 2 disulfide bridges follow: Cys77/Cys239 and Cys81/Cys237. Residues Asn97 and Asn132 are each glycosylated (N-linked (GlcNAc...) asparagine). The region spanning Thr196 to Ser223 is the PLD phosphodiesterase 1 domain. Active-site residues include His201, Lys203, and Asp208. His201 (proton donor) is an active-site residue. Phosphate contacts are provided by His201 and Lys203. Position 218 (Asn218) interacts with phosphate. Asn236, Asn284, and Asn387 each carry an N-linked (GlcNAc...) asparagine glycan. A disulfide bridge links Cys366 with Cys487. In terms of domain architecture, PLD phosphodiesterase 2 spans Tyr411 to Tyr437. A phosphate-binding site is contributed by His416. Residue His416 is the Nucleophile of the active site. Phe438 contacts Mg(2+).

Belongs to the phospholipase D family. As to quaternary structure, homodimer. Interacts with APP. N-glycosylated. In terms of processing, proteolytically processed to a soluble form that is stable within endosomes and lysosomes. During transport through the secretory pathway becomes proteolysed by cysteine proteases, thereby releasing a stable soluble lysosomal lumenal polypeptide, whereas the transmembrane-bound fragment is rapidly degraded. Its transport route to lysosomes involves ubiquitination and the ESCRT complex. Post-translationally, ubiquitinated. Ubiquitination mediates sorting into lysosomes.

It localises to the endoplasmic reticulum membrane. Its subcellular location is the lysosome lumen. The protein resides in the early endosome membrane. It is found in the late endosome membrane. The protein localises to the golgi apparatus membrane. It localises to the endosome membrane. It catalyses the reaction Exonucleolytic cleavage in the 5'- to 3'-direction to yield nucleoside 3'-phosphates.. The enzyme catalyses a 5'-end 5'-dephospho-ribonucleotidyl-ribonucleotide-RNA + H2O = a ribonucleoside 3'-phosphate + a 5'-end dephospho-ribonucleoside-RNA + H(+). The catalysed reaction is a ribonucleoside 3'-phosphate-2'-3'-cyclophospho-GMP + H2O = a ribonucleoside 3'-phosphate + 2',3'-cyclophospho-GMP + H(+). It carries out the reaction a 5'-end 5'-dephospho-2'-deoxyribonucleotidyl-2'-deoxyribonucleotide in single-stranded DNA + H2O = a 5'-end dephospho-2'-deoxyribonucleoside in single-stranded DNA + a 2'-deoxyribonucleoside 3'-phosphate + H(+). It catalyses the reaction a 5'-end 5'-phospho-2'-deoxyribonucleotide in single-stranded DNA + H2O = a 5'-end 5'-dephospho-2'-deoxyribonucleotide in single-stranded DNA + phosphate. The enzyme catalyses a 3-lyso-sn-glycero-1-phospho-(3'-acyl-1'-sn-glycerol) + a 1-acyl-sn-glycerol = a 3-acyl-sn-glycero-1-phospho-(3'-acyl-1'-sn-glycerol) + glycerol. The catalysed reaction is 3-lyso-sn-glycero-1-phospho-(3'-(9Z-octadecenoyl)-1'-sn-glycerol) + 1-(9Z-octadecenoyl)-sn-glycerol = 3-(9Z-octadecenoyl)-sn-glycero-1-phospho-(3'-(9Z-octadecenoyl)-1'-sn-glycerol) + glycerol. In terms of biological role, 5'-&gt;3' exonuclease that hydrolyzes the phosphodiester bond of single-stranded DNA (ssDNA) and RNA molecules to form nucleoside 3'-monophosphates and 5'-end 5'-hydroxy deoxyribonucleotide/ribonucleotide fragments. Partially redundant with PLD4, can cleave all four nucleotides displaying higher efficiency for ssDNA and RNA fragments initiated with uridine and guanosine residues and lower efficiency for cytidine-initiated substrates. As a result, it does not always degrade polynucleotides to the single nucleotide level, it can stall at specific sites sparing certain fragments from exonucleolytic degradation. Processes self and pathogenic ssDNA and RNA molecules that reach the endolysosomal compartment via phagocytosis or autophagy and may serve as 'danger' signals for recognition by innate immune receptors such as toll-like receptors (TLRs). Degrades mitochondrial CpG-rich ssDNA fragments to prevent TLR9 activation and autoinflammatory response, but it can cleave viral RNA to generate ligands for TLR7 activation and initiate antiviral immune responses. In plasmacytoid dendritic cells, it cooperates with endonuclease RNASET2 to release 2',3'-cyclic guanosine monophosphate (2',3'-cGMP), a potent stimulatory ligand for TLR7. Produces 2',3'-cGMPs and cytidine-rich RNA fragments that occupy TLR7 ligand-binding pockets and trigger a signaling-competent state. Can exert polynucleotide phosphatase activity toward 5'-phosphorylated ssDNA substrates although at a slow rate. Transphosphatidylase that catalyzes the exchange with R to S stereo-inversion of the glycerol moiety between (S,R)-lysophosphatidylglycerol (LPG) and monoacylglycerol (MAG) substrates to yield (S,S)-bis(monoacylglycero)phosphate (BMP). Can synthesize a variety of (S,S)-BMPs representing the main phospholipid constituent of lysosomal intralumenal vesicle (ILV) membranes that bind acid hydrolases for lipid degradation. Regulates the homeostasis and interorganellar communication of the endolysosomal system with an overall impact on cellular removal of dysfunctional organelles via autophagy as well as proper protein and lipid turnover. May play a role in myotube formation in response to ER stress. The polypeptide is 5'-3' exonuclease PLD3 (PLD3) (Macaca fascicularis (Crab-eating macaque)).